A 463-amino-acid polypeptide reads, in one-letter code: L-seryl-tRNA(Sec) selenium transferase (463 aa).

At K295 the chain carries N6-(pyridoxal phosphate)lysine.

This sequence belongs to the SelA family. Homodecamer; pentamer of dimers. Binds only one seryl-tRNA(Sec) per dimer. Pyridoxal 5'-phosphate serves as cofactor.

It localises to the cytoplasm. It carries out the reaction L-seryl-tRNA(Sec) + selenophosphate + H(+) = L-selenocysteinyl-tRNA(Sec) + phosphate. It functions in the pathway aminoacyl-tRNA biosynthesis; selenocysteinyl-tRNA(Sec) biosynthesis; selenocysteinyl-tRNA(Sec) from L-seryl-tRNA(Sec) (bacterial route): step 1/1. Converts seryl-tRNA(Sec) to selenocysteinyl-tRNA(Sec) required for selenoprotein biosynthesis. The protein is L-seryl-tRNA(Sec) selenium transferase of Escherichia coli (strain 55989 / EAEC).